Here is a 378-residue protein sequence, read N- to C-terminus: Chaperone protein DnaJ (378 aa).

One can recognise a J domain in the interval 4–68; it reads DFYEILGVSR…ETRARYDRFG (65 aa). The CR-type zinc-finger motif lies at 136-218; it reads GGEKEIRIPH…CGGAGRKQET (83 aa). Zn(2+)-binding residues include Cys149, Cys152, Cys166, Cys169, Cys192, Cys195, Cys206, and Cys209. CXXCXGXG motif repeat units lie at residues 149–156, 166–173, 192–199, and 206–213; these read CKTCSGSG, CGTCNGTG, CPTCNGEG, and CESCGGAG.

Belongs to the DnaJ family. Homodimer. Zn(2+) is required as a cofactor.

It is found in the cytoplasm. In terms of biological role, participates actively in the response to hyperosmotic and heat shock by preventing the aggregation of stress-denatured proteins and by disaggregating proteins, also in an autonomous, DnaK-independent fashion. Unfolded proteins bind initially to DnaJ; upon interaction with the DnaJ-bound protein, DnaK hydrolyzes its bound ATP, resulting in the formation of a stable complex. GrpE releases ADP from DnaK; ATP binding to DnaK triggers the release of the substrate protein, thus completing the reaction cycle. Several rounds of ATP-dependent interactions between DnaJ, DnaK and GrpE are required for fully efficient folding. Also involved, together with DnaK and GrpE, in the DNA replication of plasmids through activation of initiation proteins. The chain is Chaperone protein DnaJ from Picosynechococcus sp. (strain ATCC 27264 / PCC 7002 / PR-6) (Agmenellum quadruplicatum).